The chain runs to 86 residues: Sec-independent protein translocase protein TatA (86 aa).

Residues 1–21 (MGISIWQLLIILAIVLVLFGA) form a helical membrane-spanning segment.

Belongs to the TatA/E family. As to quaternary structure, the Tat system comprises two distinct complexes: a TatABC complex, containing multiple copies of TatA, TatB and TatC subunits, and a separate TatA complex, containing only TatA subunits. Substrates initially bind to the TatABC complex, which probably triggers association of the separate TatA complex to form the active translocon.

The protein resides in the cell inner membrane. Its function is as follows. Part of the twin-arginine translocation (Tat) system that transports large folded proteins containing a characteristic twin-arginine motif in their signal peptide across membranes. TatA could form the protein-conducting channel of the Tat system. In Hydrogenovibrio crunogenus (strain DSM 25203 / XCL-2) (Thiomicrospira crunogena), this protein is Sec-independent protein translocase protein TatA.